The primary structure comprises 350 residues: L-serine dehydratase (350 aa).

An N6-(pyridoxal phosphate)lysine modification is found at K62.

Belongs to the serine/threonine dehydratase family. The cofactor is pyridoxal 5'-phosphate.

The protein resides in the cytoplasm. The catalysed reaction is L-serine = pyruvate + NH4(+). It functions in the pathway carbohydrate biosynthesis; gluconeogenesis. The polypeptide is L-serine dehydratase (sds) (Dictyostelium discoideum (Social amoeba)).